The following is a 75-amino-acid chain: Venom serine protease inhibitor BiVSPI (75 aa).

The N-terminal stretch at 1–20 (MSRILFVFLAVMAIFSTSFG) is a signal peptide. 5 cysteine pairs are disulfide-bonded: C23–C55, C32–C51, C35–C47, C39–C75, and C57–C69. The TIL domain occupies 23–75 (CGLNEEFKSCGSCEPTCAKPRVTICTMECKIGCQCKSGYLRNGEGTCVLPEKC).

Belongs to the serine protease inhibitor-like (TIL domain-containing) family. May be O-glycosylated. In terms of tissue distribution, expressed by the venom gland (at protein level) and expressed in fat body.

Its subcellular location is the secreted. The protein resides in the target cell membrane. In terms of biological role, antimicrobial venom serine protease inhibitor. Exhibits inhibitory activity against chymotrypsin (IC(50)=19.56 nM, Ki=15.24 nM) and microbial serine proteases, such as subtilisin A (IC(50)=6.57 nM, Ki=6.83 nM) and proteinase K (IC(50)=7.11 nM, Ki=7.02 nM). Has not activity against trypsin, plasmin, tPA, thrombin, factor Xa or elastase. Binds and inhibits Gram-positive bacteria (B.subtilis (MIC=29.45 uM), B.thuringiensis (MIC=91.03 uM)) and the entomopathogenic fungus B.bassiana (MIC=30.09 uM) but not to E.coli. The protein is Venom serine protease inhibitor BiVSPI of Bombus ignitus (Bumblebee).